The chain runs to 762 residues: Poly(A) RNA polymerase CID14 (762 aa).

The interval 1–123 (MPTGFQPAES…KKEEQKAAER (123 aa)) is disordered. Basic residues predominate over residues 50 to 62 (KKNKKDKKKKGSK). 2 stretches are compositionally biased toward basic and acidic residues: residues 65–75 (QPVDEPDKKDG) and 99–123 (RKRDNSRGIEAGPRNKKEEQKAAER). Position 189 (S189) interacts with ATP. Mg(2+)-binding residues include D200 and D202. ATP-binding residues include G266, K291, S309, and Y310. Residues 336–393 (NLGTLLIEFFELFGRNFNYNDVGISIRRGGFYFSKASRGWMKGQSFLLSIEDPQDKDN) enclose the PAP-associated domain. The interval 482-762 (SIPLGADPKP…LGQSSGDMSD (281 aa)) is disordered. Acidic residues predominate over residues 536–549 (VEDDELESDDDSDS). Over residues 572 to 581 (RTANSRSTSR) the composition is skewed to polar residues. K610 contributes to the ATP binding site. Acidic residues-rich tracts occupy residues 677 to 687 (GEEEEEIDSDE) and 697 to 707 (SDGDLGSEDEI). Over residues 753–762 (LGQSSGDMSD) the composition is skewed to polar residues.

The protein belongs to the DNA polymerase type-B-like family. As to quaternary structure, component of the TRAMP complex. Requires Mg(2+) as cofactor. The cofactor is Mn(2+).

Its subcellular location is the nucleus. It localises to the nucleolus. The catalysed reaction is RNA(n) + ATP = RNA(n)-3'-adenine ribonucleotide + diphosphate. In terms of biological role, required for 3' polyadenylation of the 5.8S and 25S rRNAs as a prelude to their degradation in the exosome. Involved in the nucleolar organization to ensure faithful chromosome segregation during mitosis. This is Poly(A) RNA polymerase CID14 from Cryptococcus neoformans var. neoformans serotype D (strain JEC21 / ATCC MYA-565) (Filobasidiella neoformans).